The chain runs to 216 residues: MRVILLGPPGAGKGTQAKLISEKFSIPHISTGDIFRANIKEKTPLGIEAKRYMDNGQLVPDEVTIGIVKDRLTKDDCDNGFLLDGFPRTVAQAEALDEFLKGINKELDVALLIKVPEEFILERMTGRRVCTSCGASYHIRFNPPKIEGKCDICDNELIQRKDDTEATVKERLEVYSKQTYPLINYYKDNGIISEVNGTESIDEVFGNISNILGRDK.

10–15 (GAGKGT) is an ATP binding site. Positions 30 to 59 (STGDIFRANIKEKTPLGIEAKRYMDNGQLV) are NMP. AMP is bound by residues Thr-31, Arg-36, 57-59 (QLV), 85-88 (GFPR), and Gln-92. The segment at 126-163 (GRRVCTSCGASYHIRFNPPKIEGKCDICDNELIQRKDD) is LID. Arg-127 lines the ATP pocket. Zn(2+) contacts are provided by Cys-130 and Cys-133. 136-137 (SY) serves as a coordination point for ATP. Zn(2+) contacts are provided by Cys-150 and Cys-153. AMP contacts are provided by Arg-160 and Arg-171. Residue Glu-199 coordinates ATP.

The protein belongs to the adenylate kinase family. Monomer.

Its subcellular location is the cytoplasm. It carries out the reaction AMP + ATP = 2 ADP. It participates in purine metabolism; AMP biosynthesis via salvage pathway; AMP from ADP: step 1/1. Catalyzes the reversible transfer of the terminal phosphate group between ATP and AMP. Plays an important role in cellular energy homeostasis and in adenine nucleotide metabolism. In Clostridium botulinum (strain Loch Maree / Type A3), this protein is Adenylate kinase.